The primary structure comprises 261 residues: Cytochrome c oxidase subunit 3 (261 aa).

Topologically, residues 1–15 (MTHQTHAYHMVNPSP) are mitochondrial matrix. A helical transmembrane segment spans residues 16–34 (WPLTGALSALLMTSGLIMW). Over 35 to 40 (FHFNST) the chain is Mitochondrial intermembrane. Residues 41-66 (TLLMLGLTTNMLTMYQWWRDVIREST) form a helical membrane-spanning segment. Residues 67–72 (FQGHHT) lie on the Mitochondrial matrix side of the membrane. Residues 73–105 (PNVQKGLRYGMILFIISEVLFFTGFFWAFYHSS) traverse the membrane as a helical segment. Over 106–128 (LAPTPELGGCWPPTGIHPLNPLE) the chain is Mitochondrial intermembrane. Residues 129–152 (VPLLNTSVLLASGVSITWAHHSLM) form a helical membrane-spanning segment. Topologically, residues 153–155 (EGN) are mitochondrial matrix. Residues 156 to 183 (RNHMLQALFITIALGVYFTLLQASEYYE) traverse the membrane as a helical segment. Topologically, residues 184 to 190 (APFTISD) are mitochondrial intermembrane. The helical transmembrane segment at 191 to 223 (GVYGSTFFVATGFHGLHVIIGSTFLIVCFFRQL) threads the bilayer. Residues 224–232 (KFHFTSSHH) lie on the Mitochondrial matrix side of the membrane. Residues 233–256 (FGFEAAAWYWHFVDVVWLFLYVSI) traverse the membrane as a helical segment. The Mitochondrial intermembrane portion of the chain corresponds to 257–261 (YWWGS).

It belongs to the cytochrome c oxidase subunit 3 family. As to quaternary structure, component of the cytochrome c oxidase (complex IV, CIV), a multisubunit enzyme composed of 14 subunits. The complex is composed of a catalytic core of 3 subunits MT-CO1, MT-CO2 and MT-CO3, encoded in the mitochondrial DNA, and 11 supernumerary subunits COX4I, COX5A, COX5B, COX6A, COX6B, COX6C, COX7A, COX7B, COX7C, COX8 and NDUFA4, which are encoded in the nuclear genome. The complex exists as a monomer or a dimer and forms supercomplexes (SCs) in the inner mitochondrial membrane with NADH-ubiquinone oxidoreductase (complex I, CI) and ubiquinol-cytochrome c oxidoreductase (cytochrome b-c1 complex, complex III, CIII), resulting in different assemblies (supercomplex SCI(1)III(2)IV(1) and megacomplex MCI(2)III(2)IV(2)).

The protein localises to the mitochondrion inner membrane. It carries out the reaction 4 Fe(II)-[cytochrome c] + O2 + 8 H(+)(in) = 4 Fe(III)-[cytochrome c] + 2 H2O + 4 H(+)(out). Functionally, component of the cytochrome c oxidase, the last enzyme in the mitochondrial electron transport chain which drives oxidative phosphorylation. The respiratory chain contains 3 multisubunit complexes succinate dehydrogenase (complex II, CII), ubiquinol-cytochrome c oxidoreductase (cytochrome b-c1 complex, complex III, CIII) and cytochrome c oxidase (complex IV, CIV), that cooperate to transfer electrons derived from NADH and succinate to molecular oxygen, creating an electrochemical gradient over the inner membrane that drives transmembrane transport and the ATP synthase. Cytochrome c oxidase is the component of the respiratory chain that catalyzes the reduction of oxygen to water. Electrons originating from reduced cytochrome c in the intermembrane space (IMS) are transferred via the dinuclear copper A center (CU(A)) of subunit 2 and heme A of subunit 1 to the active site in subunit 1, a binuclear center (BNC) formed by heme A3 and copper B (CU(B)). The BNC reduces molecular oxygen to 2 water molecules using 4 electrons from cytochrome c in the IMS and 4 protons from the mitochondrial matrix. In Gazella bennettii (Chinkara), this protein is Cytochrome c oxidase subunit 3 (MT-CO3).